Reading from the N-terminus, the 205-residue chain is MTPPGRLYLPRVRGTRLLFLLLGLLLALPPRAKGLPGVGLLPSAARAAQQHPQKHFAHGTLKPAAHLVGDPSMQNSLRWRANTDRAFLRHGFSLSNNSLLVPTSGLYFVYSQVVFSGEGCSSKAVSTPLYLAHEVQLFSSQYPFHVPLLSAQKSVCPGPQGPWVRSVYQGAVFLLTRGDQLSTHTDGISHLLFSPSSVFFGAFAL.

Residues 1-34 (MTPPGRLYLPRVRGTRLLFLLLGLLLALPPRAKG) form the signal peptide. Positions 63-205 (PAAHLVGDPS…SSVFFGAFAL (143 aa)) constitute a THD domain. N-linked (GlcNAc...) asparagine glycosylation occurs at asparagine 96. A disulfide bridge links cysteine 120 with cysteine 156.

The protein belongs to the tumor necrosis factor family. As to quaternary structure, homotrimer, and heterotrimer of either two LTB and one LTA subunits or (less prevalent) two LTA and one LTB subunits. Interacts with TNFRSF14.

It localises to the secreted. The protein resides in the membrane. Its function is as follows. Cytokine that in its homotrimeric form binds to TNFRSF1A/TNFR1, TNFRSF1B/TNFBR and TNFRSF14/HVEM. In its heterotrimeric form with LTB binds to TNFRSF3/LTBR. Lymphotoxin is produced by lymphocytes and is cytotoxic for a wide range of tumor cells in vitro and in vivo. The chain is Lymphotoxin-alpha (LTA) from Marmota monax (Woodchuck).